The primary structure comprises 355 residues: MTAKTRRLMVMAGGTGGHVFPGLAVAHHLMAQGWQVRWLGTANRMEADLVPQHGIDIDFIRISGLRGKGLKAQLLAPVRIWRALRQARRIMRAWRPDVVLGMGGYVSGPGGLAAWSCGIPVVLHEQNGIAGLTNRGLAKISRKVLQAFPGAFPHADVVGNPVRDAVLALPAPEARFRDRTGPIRVLIIGGSQGARVLNQTMPAVAARLAGILTLWHQVGKGALEEVNRAYAANGETQHKVVEFIDDMAAAYAWADAVVCRAGALTVSEIAAAGLPALFVPFMHKDRQQYWNARLLEQACAAKIIEQPAFSVERVSDVLAGWDRPTLLTMAQRARAAAIPDATERVAREVAAAVRA.

Residues T15–G17, N127, R163, S191, I244, A263–E268, and Q288 contribute to the UDP-N-acetyl-alpha-D-glucosamine site.

Belongs to the glycosyltransferase 28 family. MurG subfamily.

It localises to the cell inner membrane. The enzyme catalyses di-trans,octa-cis-undecaprenyl diphospho-N-acetyl-alpha-D-muramoyl-L-alanyl-D-glutamyl-meso-2,6-diaminopimeloyl-D-alanyl-D-alanine + UDP-N-acetyl-alpha-D-glucosamine = di-trans,octa-cis-undecaprenyl diphospho-[N-acetyl-alpha-D-glucosaminyl-(1-&gt;4)]-N-acetyl-alpha-D-muramoyl-L-alanyl-D-glutamyl-meso-2,6-diaminopimeloyl-D-alanyl-D-alanine + UDP + H(+). Its pathway is cell wall biogenesis; peptidoglycan biosynthesis. Cell wall formation. Catalyzes the transfer of a GlcNAc subunit on undecaprenyl-pyrophosphoryl-MurNAc-pentapeptide (lipid intermediate I) to form undecaprenyl-pyrophosphoryl-MurNAc-(pentapeptide)GlcNAc (lipid intermediate II). The sequence is that of UDP-N-acetylglucosamine--N-acetylmuramyl-(pentapeptide) pyrophosphoryl-undecaprenol N-acetylglucosamine transferase from Sodalis glossinidius (strain morsitans).